The chain runs to 723 residues: Polyribonucleotide nucleotidyltransferase (723 aa).

Positions 487 and 493 each coordinate Mg(2+). Positions 554 to 613 (PKILIMHINPDKIREVIGPSGKQINKIIDETGVKIDIEQDGTIFISSVDEAANQKAKQII) constitute a KH domain. Residues 623–691 (GQVYLGKVKR…KQGRVNLSRK (69 aa)) enclose the S1 motif domain. The segment at 702–723 (GELPRESREKRGRRPERHRMKP) is disordered. Over residues 711-723 (KRGRRPERHRMKP) the composition is skewed to basic residues.

This sequence belongs to the polyribonucleotide nucleotidyltransferase family. Requires Mg(2+) as cofactor.

The protein localises to the cytoplasm. The enzyme catalyses RNA(n+1) + phosphate = RNA(n) + a ribonucleoside 5'-diphosphate. In terms of biological role, involved in mRNA degradation. Catalyzes the phosphorolysis of single-stranded polyribonucleotides processively in the 3'- to 5'-direction. The protein is Polyribonucleotide nucleotidyltransferase of Geobacillus kaustophilus (strain HTA426).